Reading from the N-terminus, the 864-residue chain is Protein translocase subunit SecA (864 aa).

Residues Gln-87, 105-109 (GEGKT), and Asp-494 contribute to the ATP site. The tract at residues 809 to 864 (AKATELRHKEQPAELSYSGGDEDGAKTPSRRNAPKVGRNDPCPCGSGKKYKKCCGA) is disordered. A compositionally biased stretch (basic and acidic residues) spans 810-820 (KATELRHKEQP). The Zn(2+) site is built by Cys-850, Cys-852, Cys-861, and Cys-862.

Belongs to the SecA family. Monomer and homodimer. Part of the essential Sec protein translocation apparatus which comprises SecA, SecYEG and auxiliary proteins SecDF-YajC and YidC. Zn(2+) is required as a cofactor.

The protein resides in the cell inner membrane. It localises to the cytoplasm. The catalysed reaction is ATP + H2O + cellular proteinSide 1 = ADP + phosphate + cellular proteinSide 2.. In terms of biological role, part of the Sec protein translocase complex. Interacts with the SecYEG preprotein conducting channel. Has a central role in coupling the hydrolysis of ATP to the transfer of proteins into and across the cell membrane, serving as an ATP-driven molecular motor driving the stepwise translocation of polypeptide chains across the membrane. The polypeptide is Protein translocase subunit SecA (Oleidesulfovibrio alaskensis (strain ATCC BAA-1058 / DSM 17464 / G20) (Desulfovibrio alaskensis)).